A 429-amino-acid polypeptide reads, in one-letter code: Formate-dependent phosphoribosylglycinamide formyltransferase (429 aa).

Residues 26-27 (EL) and glutamate 86 each bind N(1)-(5-phospho-beta-D-ribosyl)glycinamide. ATP is bound by residues arginine 118, lysine 159, 199 to 202 (EEHI), and glutamate 207. The region spanning 123–319 (ETLVKEAKVP…EFGLHLRAVL (197 aa)) is the ATP-grasp domain. Residues glutamate 276 and glutamate 288 each contribute to the Mg(2+) site. Residues aspartate 295, lysine 375, and 382-383 (RR) each bind N(1)-(5-phospho-beta-D-ribosyl)glycinamide.

Belongs to the PurK/PurT family. In terms of assembly, homodimer.

The catalysed reaction is N(1)-(5-phospho-beta-D-ribosyl)glycinamide + formate + ATP = N(2)-formyl-N(1)-(5-phospho-beta-D-ribosyl)glycinamide + ADP + phosphate + H(+). The protein operates within purine metabolism; IMP biosynthesis via de novo pathway; N(2)-formyl-N(1)-(5-phospho-D-ribosyl)glycinamide from N(1)-(5-phospho-D-ribosyl)glycinamide (formate route): step 1/1. In terms of biological role, involved in the de novo purine biosynthesis. Catalyzes the transfer of formate to 5-phospho-ribosyl-glycinamide (GAR), producing 5-phospho-ribosyl-N-formylglycinamide (FGAR). Formate is provided by PurU via hydrolysis of 10-formyl-tetrahydrofolate. In Pyrococcus abyssi (strain GE5 / Orsay), this protein is Formate-dependent phosphoribosylglycinamide formyltransferase.